Consider the following 320-residue polypeptide: Carbonic anhydrase 6 (320 aa).

The N-terminal stretch at 1–17 (MRALALLLALPLLGARA) is a signal peptide. The Alpha-carbonic anhydrase domain maps to 21-278 (SLWTYSEGAL…LNGRVVESNF (258 aa)). A disulfide bridge connects residues Cys42 and Cys224. The active-site Proton donor/acceptor is His85. Positions 111, 113, and 138 each coordinate Zn(2+). 220-221 (TT) contacts substrate. Residue Asn256 is glycosylated (N-linked (GlcNAc...) asparagine).

It belongs to the alpha-carbonic anhydrase family. Zn(2+) serves as cofactor.

It is found in the secreted. The catalysed reaction is hydrogencarbonate + H(+) = CO2 + H2O. Functionally, reversible hydration of carbon dioxide. Its role in saliva is unknown. This chain is Carbonic anhydrase 6 (CA6), found in Canis lupus familiaris (Dog).